A 218-amino-acid polypeptide reads, in one-letter code: Phosphoribosylformylglycinamidine synthase subunit PurQ (218 aa).

Positions 2-218 (RVGVIRFPGS…FFRGILKFRG (217 aa)) constitute a Glutamine amidotransferase type-1 domain. Cys-85 (nucleophile) is an active-site residue. Active-site residues include His-192 and Glu-194.

In terms of assembly, part of the FGAM synthase complex composed of 1 PurL, 1 PurQ and 2 PurS subunits.

The protein resides in the cytoplasm. It carries out the reaction N(2)-formyl-N(1)-(5-phospho-beta-D-ribosyl)glycinamide + L-glutamine + ATP + H2O = 2-formamido-N(1)-(5-O-phospho-beta-D-ribosyl)acetamidine + L-glutamate + ADP + phosphate + H(+). It catalyses the reaction L-glutamine + H2O = L-glutamate + NH4(+). It functions in the pathway purine metabolism; IMP biosynthesis via de novo pathway; 5-amino-1-(5-phospho-D-ribosyl)imidazole from N(2)-formyl-N(1)-(5-phospho-D-ribosyl)glycinamide: step 1/2. Functionally, part of the phosphoribosylformylglycinamidine synthase complex involved in the purines biosynthetic pathway. Catalyzes the ATP-dependent conversion of formylglycinamide ribonucleotide (FGAR) and glutamine to yield formylglycinamidine ribonucleotide (FGAM) and glutamate. The FGAM synthase complex is composed of three subunits. PurQ produces an ammonia molecule by converting glutamine to glutamate. PurL transfers the ammonia molecule to FGAR to form FGAM in an ATP-dependent manner. PurS interacts with PurQ and PurL and is thought to assist in the transfer of the ammonia molecule from PurQ to PurL. The protein is Phosphoribosylformylglycinamidine synthase subunit PurQ of Methanothermobacter thermautotrophicus (strain ATCC 29096 / DSM 1053 / JCM 10044 / NBRC 100330 / Delta H) (Methanobacterium thermoautotrophicum).